We begin with the raw amino-acid sequence, 180 residues long: CASP-like protein 5A1 (180 aa).

The Cytoplasmic segment spans residues 1 to 36; that stretch reads MEVSHPAVHPVAVPPVLTEPPARVRMKDYQGMPGTL. Residues 37-57 traverse the membrane as a helical segment; that stretch reads GGLALRLGQLGFAVLSFSIMV. Over 58 to 67 the chain is Extracellular; it reads STPDFSQVTA. The helical transmembrane segment at 68–88 threads the bilayer; the sequence is FCYLVAATVLQTLWSSITAVV. Residues 89-102 are Cytoplasmic-facing; that stretch reads DIYALSVRRSLHHS. A helical transmembrane segment spans residues 103–123; it reads LLVGLFAVGDGVTSTLTFAAA. Topologically, residues 124–150 are extracellular; that stretch reads CATAGITVLIDNDLDECGQNHCGRFEA. The chain crosses the membrane as a helical span at residues 151-171; the sequence is AAAMAFLSWIMAAPSFLLAFW. The Cytoplasmic portion of the chain corresponds to 172 to 180; that stretch reads SFGNKIVCF.

The protein belongs to the Casparian strip membrane proteins (CASP) family. As to quaternary structure, homodimer and heterodimers.

Its subcellular location is the cell membrane. The protein is CASP-like protein 5A1 of Pteridium aquilinum subsp. aquilinum (Bracken fern).